The following is a 537-amino-acid chain: Zinc finger protein 835 (537 aa).

The segment at 12–109 is disordered; the sequence is AELEGNWKHE…RERGGGPKKP (98 aa). The span at 63 to 77 shows a compositional bias: polar residues; the sequence is TISSPAATQASVPDD. Residues 89 to 104 show a composition bias toward basic and acidic residues; it reads SPKERHPDSRQRERGG. 14 C2H2-type zinc fingers span residues 110 to 132, 138 to 160, 166 to 188, 194 to 216, 222 to 244, 250 to 272, 278 to 300, 306 to 328, 334 to 356, 362 to 384, 390 to 412, 418 to 440, 446 to 468, and 474 to 496; these read WKCGDCGKAFSYCSAFILHQRIH, FACPECGKAFSQSVHLTLHQRTH, YACHECGKAFSQGSYLASHWRTH, HRCADCGKAFTRVTHLTQHRRVH, YACAQCAKAFRNRSSLIEHQRIH, YECSACAKAFRFSSALIRHQRIH, YRCGQCAKAFAQIAHLTQHRRVH, YTCQDCGALFSQSASLAEHRRIH, YACGQCAKAFTQVSHLTQHQRTH, YPCHDCGKRFSNRSHLLQHRLVH, YRCLQCGAAFSHVSSLIEHQKIH, YKCGECGKAFSQGSSLALHQRTH, YTCPECGKAFSNRSYLIQHHIVH, and YECSGCGKAFSFSSALIRHQRTH. The segment at 497–537 is disordered; sequence ADSSGRLCPAPTPDSTPGLSQGGETCQQGCPGRNPRGPAED. Positions 509–524 are enriched in polar residues; that stretch reads PDSTPGLSQGGETCQQ.

It belongs to the krueppel C2H2-type zinc-finger protein family.

The protein localises to the nucleus. Its function is as follows. May be involved in transcriptional regulation. This is Zinc finger protein 835 (ZNF835) from Homo sapiens (Human).